The chain runs to 211 residues: Ribonuclease MRP protein subunit rmp1 (211 aa).

A helical membrane pass occupies residues 73–93; sequence PALGLVLLGILARVWFVMGGI. Serine 156 bears the Phosphoserine mark. The disordered stretch occupies residues 178 to 211; the sequence is SQGTKRKSKNSNSTVKKKKKRARKGRDEIDDIFG. Residues 181–201 show a composition bias toward basic residues; the sequence is TKRKSKNSNSTVKKKKKRARK.

In terms of assembly, component of RNase MRP complex which consists of an RNA moiety and at least 10 protein subunits.

The protein resides in the membrane. Its subcellular location is the nucleus. It localises to the nucleolus. In terms of biological role, functions as part of ribonuclease MRP (RNase MRP), which is involved in rRNA processing in mitochondria. The protein is Ribonuclease MRP protein subunit rmp1 of Schizosaccharomyces pombe (strain 972 / ATCC 24843) (Fission yeast).